A 546-amino-acid polypeptide reads, in one-letter code: Probable protein kinase UbiB (546 aa).

The Protein kinase domain occupies 124-502 (DFSVEPLASA…HVRQGQSRYL (379 aa)). ATP is bound by residues 130 to 138 (LASASIAQV) and lysine 153. Residue aspartate 288 is the Proton acceptor of the active site. Transmembrane regions (helical) follow at residues 501 to 521 (YLFGIGAVLLLSGTLLFIHRP) and 522 to 542 (EWGMMPGWLMAGGVVTWLIGW).

Belongs to the ABC1 family. UbiB subfamily.

The protein resides in the cell inner membrane. It functions in the pathway cofactor biosynthesis; ubiquinone biosynthesis [regulation]. Its function is as follows. Is probably a protein kinase regulator of UbiI activity which is involved in aerobic coenzyme Q (ubiquinone) biosynthesis. In Klebsiella pneumoniae (strain 342), this protein is Probable protein kinase UbiB.